Reading from the N-terminus, the 163-residue chain is Protein VASCULATURE COMPLEXITY AND CONNECTIVITY (163 aa).

The N-terminal stretch at 1-27 is a signal peptide; the sequence is MTKIGGILVCLVIVGLDVAAAILGIQA. The next 3 membrane-spanning stretches (helical) occupy residues 54-74, 95-115, and 133-153; these read LGLG…LVGG, MACL…IVIG, and FLSI…AYYV.

The protein belongs to the DESIGUAL family. Interacts with OPS. In terms of tissue distribution, expressed in vascular cells, mostly in hypocotyls, and, to a lower extent, in seedlings, roots, flowers, siliques, developing leaves and inflorescences, but barely in mature leaves and seeds. High levels in leaf primordia.

It localises to the endoplasmic reticulum membrane. Functionally, required, together with OPS, for embryo provasculature development and cotyledon vascular complexity and connectivity. Necessary, partially redundantly with DEAL2 and DEAL3, to ensure bilateral symmetry development and early leaf margin patterning, probably via the regulation of auxin and CUC2 distribution. Regulates cell proliferation but not cell expansion. This chain is Protein VASCULATURE COMPLEXITY AND CONNECTIVITY, found in Arabidopsis thaliana (Mouse-ear cress).